Here is a 399-residue protein sequence, read N- to C-terminus: Elongation factor Tu (399 aa).

One can recognise a tr-type G domain in the interval 10–209 (KPHVNIGTIG…EVDRYIPTPE (200 aa)). Residues 19–26 (GHVDHGKT) are G1. 19–26 (GHVDHGKT) is a GTP binding site. T26 is a binding site for Mg(2+). Positions 60–64 (GITIA) are G2. Residues 81 to 84 (DCPG) are G3. Residues 81 to 85 (DCPGH) and 136 to 139 (NKED) each bind GTP. Positions 136-139 (NKED) are G4. Residues 174 to 176 (SAL) are G5.

The protein belongs to the TRAFAC class translation factor GTPase superfamily. Classic translation factor GTPase family. EF-Tu/EF-1A subfamily. In terms of assembly, monomer.

Its subcellular location is the cytoplasm. The catalysed reaction is GTP + H2O = GDP + phosphate + H(+). Its function is as follows. GTP hydrolase that promotes the GTP-dependent binding of aminoacyl-tRNA to the A-site of ribosomes during protein biosynthesis. The protein is Elongation factor Tu of Wolinella succinogenes (strain ATCC 29543 / DSM 1740 / CCUG 13145 / JCM 31913 / LMG 7466 / NCTC 11488 / FDC 602W) (Vibrio succinogenes).